We begin with the raw amino-acid sequence, 121 residues long: Small ribosomal subunit protein uS13 (121 aa).

Residues 92 to 121 (RKGLPMRGQRTRTNARTRKGPRRAAQALKK) form a disordered region.

The protein belongs to the universal ribosomal protein uS13 family. In terms of assembly, part of the 30S ribosomal subunit. Forms a loose heterodimer with protein S19. Forms two bridges to the 50S subunit in the 70S ribosome.

Located at the top of the head of the 30S subunit, it contacts several helices of the 16S rRNA. In the 70S ribosome it contacts the 23S rRNA (bridge B1a) and protein L5 of the 50S subunit (bridge B1b), connecting the 2 subunits; these bridges are implicated in subunit movement. Contacts the tRNAs in the A and P-sites. The sequence is that of Small ribosomal subunit protein uS13 from Burkholderia cenocepacia (strain ATCC BAA-245 / DSM 16553 / LMG 16656 / NCTC 13227 / J2315 / CF5610) (Burkholderia cepacia (strain J2315)).